Here is a 336-residue protein sequence, read N- to C-terminus: Protein FPV127 (336 aa).

The interval 1-22 is disordered; sequence MGGGLVLPTRDPPKEQDTSETA.

This sequence belongs to the poxviruses A16/G9/J5 family.

In Vertebrata (FPV), this protein is Protein FPV127.